Consider the following 410-residue polypeptide: MGMSRRMFLTVYGSLWLLLLLSRPGVSKPQLCQTCQNLVTNVLKGIEKTAGLNFGGGNTAWEEEKLSKYEISETRLLEVIETACDKSDFDCNKMLEQNEEHMESWWFKKQKEQPDLFQWLCMDTLRLCCPKGRFGADCLSCPGGTEKPCSGNGQCNGDGTRFGTGVCDCYTSYGGPVCMDCALGYYEQARNESHLVCSECYRACSKCIGPGDDQCVLCKRGWLLHDGKCIDIDECGTEKDHCKSNQFCFNTDGSYECRECDKSCIGCMGGGPARCKKCNKGYYRDGVKCLDVDECDSELPKCKGSHEECVNTEGSFTCVCEKDYSRIDGMCRPDSYDSNAEKGLFDDITDDEVVVLQQMFFGVVICALATLAAKGDMVFTAIFIGAVAAMAGYWLSEKGDRALDSFMKGR.

The signal sequence occupies residues 1–29 (MGMSRRMFLTVYGSLWLLLLLSRPGVSKP). Residues 30–352 (QLCQTCQNLV…GLFDDITDDE (323 aa)) are Extracellular-facing. A CXXC motif is present at residues 32–35 (CQTC). 4 disulfides stabilise this stretch: Cys32–Cys35, Cys141–Cys155, Cys149–Cys167, and Cys169–Cys178. One can recognise an EGF-like 1 domain in the interval 139–179 (LSCPGGTEKPCSGNGQCNGDGTRFGTGVCDCYTSYGGPVCM). FU repeat units follow at residues 194 to 243 (HLVC…DHCK) and 254 to 301 (SYEC…ELPK). The short motif at 264–267 (CIGC) is the CXXC element. Cystine bridges form between Cys264–Cys267, Cys295–Cys309, Cys302–Cys318, and Cys320–Cys331. The EGF-like 2; calcium-binding domain maps to 291 to 332 (DVDECDSELPKCKGSHEECVNTEGSFTCVCEKDYSRIDGMCR). Residues 353–373 (VVVLQQMFFGVVICALATLAA) form a helical membrane-spanning segment. Residue Lys374 is a topological domain, cytoplasmic. The chain crosses the membrane as a helical span at residues 375–395 (GDMVFTAIFIGAVAAMAGYWL). The Extracellular segment spans residues 396-410 (SEKGDRALDSFMKGR).

It belongs to the CRELD family.

It localises to the membrane. It catalyses the reaction Catalyzes the rearrangement of -S-S- bonds in proteins.. Functionally, protein disulfide isomerase. Promotes the localization of acetylcholine receptors (AChRs) to the plasma membrane. The polypeptide is Protein disulfide isomerase CRELD1 (creld1) (Xenopus tropicalis (Western clawed frog)).